Here is a 783-residue protein sequence, read N- to C-terminus: Cation/H(+) antiporter 11 (783 aa).

A run of 12 helical transmembrane segments spans residues 31 to 51, 61 to 81, 101 to 120, 135 to 155, 175 to 195, 205 to 225, 244 to 264, 276 to 295, 300 to 322, 360 to 380, 389 to 409, and 418 to 438; these read VVFG…FFCI, IGVS…PQLF, AALR…LMTV, VVIG…LNLF, VIVI…LLEL, LALS…IVAT, AVII…QWII, IYIH…FVFF, VLGP…ALEA, IFLT…LCLY, LAVS…YEAV, and ATYA…PMVV.

The protein belongs to the monovalent cation:proton antiporter 2 (CPA2) transporter (TC 2.A.37) family. CHX (TC 2.A.37.4) subfamily. Specifically expressed in pollen.

The protein resides in the membrane. Functionally, may operate as a cation/H(+) antiporter. The sequence is that of Cation/H(+) antiporter 11 (CHX11) from Arabidopsis thaliana (Mouse-ear cress).